A 281-amino-acid polypeptide reads, in one-letter code: Digeranylgeranylglyceryl phosphate synthase (281 aa).

7 helical membrane passes run 14-34 (AMAA…LSSA), 38-58 (VSLS…VTGA), 95-115 (LFLF…CGII), 149-169 (FLFG…VLFL), 207-227 (ASYI…VPYL), 235-255 (YLFV…QILG), and 259-279 (AARS…SFIV).

Belongs to the UbiA prenyltransferase family. DGGGP synthase subfamily. Mg(2+) serves as cofactor.

The protein resides in the cell membrane. The enzyme catalyses sn-3-O-(geranylgeranyl)glycerol 1-phosphate + (2E,6E,10E)-geranylgeranyl diphosphate = 2,3-bis-O-(geranylgeranyl)-sn-glycerol 1-phosphate + diphosphate. It participates in membrane lipid metabolism; glycerophospholipid metabolism. Its function is as follows. Prenyltransferase that catalyzes the transfer of the geranylgeranyl moiety of geranylgeranyl diphosphate (GGPP) to the C2 hydroxyl of (S)-3-O-geranylgeranylglyceryl phosphate (GGGP). This reaction is the second ether-bond-formation step in the biosynthesis of archaeal membrane lipids. The polypeptide is Digeranylgeranylglyceryl phosphate synthase (Methanococcoides burtonii (strain DSM 6242 / NBRC 107633 / OCM 468 / ACE-M)).